The chain runs to 338 residues: S-adenosylmethionine:tRNA ribosyltransferase-isomerase (338 aa).

The protein belongs to the QueA family. In terms of assembly, monomer.

It localises to the cytoplasm. It carries out the reaction 7-aminomethyl-7-carbaguanosine(34) in tRNA + S-adenosyl-L-methionine = epoxyqueuosine(34) in tRNA + adenine + L-methionine + 2 H(+). It functions in the pathway tRNA modification; tRNA-queuosine biosynthesis. Its function is as follows. Transfers and isomerizes the ribose moiety from AdoMet to the 7-aminomethyl group of 7-deazaguanine (preQ1-tRNA) to give epoxyqueuosine (oQ-tRNA). This chain is S-adenosylmethionine:tRNA ribosyltransferase-isomerase, found in Carboxydothermus hydrogenoformans (strain ATCC BAA-161 / DSM 6008 / Z-2901).